A 208-amino-acid polypeptide reads, in one-letter code: Uracil phosphoribosyltransferase (208 aa).

Residues R78, R103, and 130–138 (DPMLATGGS) contribute to the 5-phospho-alpha-D-ribose 1-diphosphate site. Uracil-binding positions include I193 and 198-200 (GDA). D199 is a 5-phospho-alpha-D-ribose 1-diphosphate binding site.

This sequence belongs to the UPRTase family. Mg(2+) serves as cofactor.

It catalyses the reaction UMP + diphosphate = 5-phospho-alpha-D-ribose 1-diphosphate + uracil. Its pathway is pyrimidine metabolism; UMP biosynthesis via salvage pathway; UMP from uracil: step 1/1. Allosterically activated by GTP. Its function is as follows. Catalyzes the conversion of uracil and 5-phospho-alpha-D-ribose 1-diphosphate (PRPP) to UMP and diphosphate. The protein is Uracil phosphoribosyltransferase of Mannheimia succiniciproducens (strain KCTC 0769BP / MBEL55E).